The following is a 153-amino-acid chain: Riboflavin synthase (153 aa).

This sequence belongs to the DMRL synthase family.

It catalyses the reaction 2 6,7-dimethyl-8-(1-D-ribityl)lumazine + H(+) = 5-amino-6-(D-ribitylamino)uracil + riboflavin. Its pathway is cofactor biosynthesis; riboflavin biosynthesis; riboflavin from 2-hydroxy-3-oxobutyl phosphate and 5-amino-6-(D-ribitylamino)uracil: step 2/2. The polypeptide is Riboflavin synthase (ribC) (Archaeoglobus fulgidus (strain ATCC 49558 / DSM 4304 / JCM 9628 / NBRC 100126 / VC-16)).